Consider the following 471-residue polypeptide: MDNHSSVPWASAASVTCLSLDAKCHSSSSSSSSKSAASSISAIPQEETQTMRHIAHTQRCLSRLTSLVALLLIVLPMVFSPAHSCGPGRGLGRHRARNLYPLVLKQTIPNLSEYTNSASGPLEGVIRRDSPKFKDLVPNYNRDILFRDEEGTGADRLMSKRCKEKLNVLAYSVMNEWPGIRLLVTESWDEDYHHGQESLHYEGRAVTIATSDRDQSKYGMLARLAVEAGFDWVSYVSRRHIYCSVKSDSSISSHVHGCFTPESTALLESGVRKPLGELSIGDRVLSMTANGQAVYSEVILFMDRNLEQMQNFVQLHTDGGAVLTVTPAHLVSVWQPESQKLTFVFADRIEEKNQVLVRDVETGELRPQRVVKVGSVRSKGVVAPLTREGTIVVNSVAASCYAVINSQSLAHWGLAPMRLLSTLEAWLPAKEQLHSSPKVVSSAQQQNGIHWYANALYKVKDYVLPQSWRHD.

The N-palmitoyl cysteine moiety is linked to residue C85. Ca(2+) is bound by residues E149, E150, D155, T185, E186, D189, and D191. G257 carries the Cholesterol glycine ester lipid modification.

It belongs to the hedgehog family. Interacts with shf. Interacts with ptc and CG5504/l(2)tid. The C-terminal part of the hedgehog protein precursor displays an autoproteolysis activity that results in the cleavage of the full-length protein into two parts (N-product and C-product). In addition, the C-terminal part displays a cholesterol transferase activity that results by the covalent attachment of a cholesterol moiety to the C-terminal of the newly generated N-product. The N-product is the active species in both local and long-range signaling, whereas the C-product has no signaling activity. In terms of processing, cholesterylation is required for N-product targeting to lipid rafts and multimerization. Post-translationally, N-palmitoylation by Rasp of the hedgehog N-product, within the secretory pathway, is required for the embryonic and larval patterning activities of the hedgehog signal. As to expression, in embryos, expression starts at stage 5 as a few stripes at the anterior and posterior ends, this expands to 17 stripes during stages 8-11. Expression is also seen in CNS and some PNS cells until stage 13-14, and in foregut, hindgut and salivary glands. In larvae, expression is seen in the posterior compartment of the wing, leg and antennal imaginal disks. In adults, high level of expression in specific regions of the proventriculus and hindgut, with slightly lower levels of expression in the posterior midgut. Relatively low levels of expression in the anterior midgut region.

The protein resides in the nucleus. Its subcellular location is the cytoplasm. It localises to the cell membrane. The enzyme catalyses glycyl-L-cysteinyl-[protein] + cholesterol + H(+) = [protein]-C-terminal glycyl cholesterol ester + N-terminal L-cysteinyl-[protein]. In terms of biological role, the C-terminal part of the hedgehog protein precursor displays an autoproteolysis activity that results in the cleavage of the full-length protein into two parts (N-product and C-product). In addition, the C-terminal part displays a cholesterol transferase activity that results by the covalent attachment of a cholesterol moiety to the C-terminal of the newly generated N-product. Once cleaved, the C-product has no signaling activity and diffuses from the cell. Its function is as follows. The dually lipidated hedgehog protein N-product is a morphogen which is essential for a variety of patterning events during development. Establishes the anterior-posterior axis of the embryonic segments and patterns the larval imaginal disks. Binds to the patched (ptc) receptor, which functions in association with smoothened (smo), to activate the transcription of target genes wingless (wg), decapentaplegic (dpp) and ptc. In the absence of hh, ptc represses the constitutive signaling activity of smo through fused (fu). Essential component of a signaling pathway which regulates the Duox-dependent gut immune response to bacterial uracil; required to activate Cad99C-dependent endosome formation, norpA-dependent Ca2+ mobilization and p38 MAPK, which are essential steps in the Duox-dependent production of reactive oxygen species (ROS) in response to intestinal bacterial infection. During photoreceptor differentiation, it up-regulates transcription of Ubr3, which in turn promotes the hh-signaling pathway by mediating the ubiquitination and degradation of cos. The chain is Protein hedgehog from Drosophila melanogaster (Fruit fly).